We begin with the raw amino-acid sequence, 233 residues long: Sugar fermentation stimulation protein homolog (233 aa).

Belongs to the SfsA family.

The chain is Sugar fermentation stimulation protein homolog from Pyrobaculum neutrophilum (strain DSM 2338 / JCM 9278 / NBRC 100436 / V24Sta) (Thermoproteus neutrophilus).